Consider the following 716-residue polypeptide: uncharacterized protein (716 aa).

2 disordered regions span residues S84 to P103 and V153 to Q189. A Phosphoserine modification is found at S97. Residues K201, K204, K237, K283, and K626 each participate in a glycyl lysine isopeptide (Lys-Gly) (interchain with G-Cter in SUMO2) cross-link.

This is an uncharacterized protein from Mus musculus (Mouse).